A 694-amino-acid polypeptide reads, in one-letter code: Long-chain-fatty-acid--CoA ligase 4 (694 aa).

The tract at residues 1–21 is disordered; that stretch reads MTEQYSVAVGEAANEHETAPR. Position 269 to 280 (269 to 280) interacts with ATP; that stretch reads YTSGSTGTPKGV. Positions 527 to 576 match the FACS motif; it reads DGWFRTGDIAEWTPKGQVKIIDRKKNLVKTLNGEYIALEKLESIYRSNPY.

The protein belongs to the ATP-dependent AMP-binding enzyme family. As to quaternary structure, interacts with FAT1. Requires Mg(2+) as cofactor.

The protein resides in the lipid droplet. The catalysed reaction is a long-chain fatty acid + ATP + CoA = a long-chain fatty acyl-CoA + AMP + diphosphate. It carries out the reaction (9Z)-hexadecenoate + ATP + CoA = (9Z)-hexadecenoyl-CoA + AMP + diphosphate. The enzyme catalyses (9Z)-octadecenoate + ATP + CoA = (9Z)-octadecenoyl-CoA + AMP + diphosphate. It catalyses the reaction hexadecanoate + ATP + CoA = hexadecanoyl-CoA + AMP + diphosphate. In terms of biological role, activates long-chain fatty acids (LCFA) by esterification of the fatty acids into metabolically active CoA-thioesters for subsequent degradation or incorporation into phospholipids. Also facilitates the transport of LCFAs into the cell, either by active transport or by decreasing the intracellular LCFA concentration. Contributes, with FAA1, to the activation of imported myristate. Also involved in long-chain base (LCB) uptake. In contrast ot LCFA uptake, LCB uptake does not require ATP, suggesting that the enzyme is directly involved in LCB uptake. Involved in the sphingolipid-to-glycerolipid metabolic pathway, converting the sphingolipid metabolite hexadecenoic acid to hexadecenoyl-CoA, which is then further converted to glycerolipids. The polypeptide is Long-chain-fatty-acid--CoA ligase 4 (FAA4) (Saccharomyces cerevisiae (strain ATCC 204508 / S288c) (Baker's yeast)).